Consider the following 436-residue polypeptide: MLNSSGVRTQRRSPRPLSLGGRKIITPTKFAYDHHNPDKVLDFVEMDCLEPKTKNNLTGKLLLVASLLILAIIVISQSSSFTSPSAFSQREEGVTHVLVTGGAGYIGSHAALRLLRDSYRVTIVDNLSRGNLGAVKTLQQLFPQTGRLQFIYADLGDPLAVEKIFSENAFDAVMHFAAVAYVGESTLYPLKYYHNITSNTLGVLEAMARHKVKKLIYSSTCATYGEPEKMPITEDTPQVPINPYGKAKKMAEDMILDFSKNSDMAVMILRYFNVIGSDPGGRLGEAPRPELREQGRISGACFDAARGFIPGLQVKGTDYKTSDGTCIRDYIDVTDLVDAHVKALEKAQPRKVGIYNVGTGKGRSVKEFVEACKKATGVEIKVDFLPRRPGDYAEVYSDPTKILKDLNWTARFTNLQDSLQVAWRWQKIHPHGYNSY.

The interval 1–20 (MLNSSGVRTQRRSPRPLSLG) is disordered. Residues 1 to 60 (MLNSSGVRTQRRSPRPLSLGGRKIITPTKFAYDHHNPDKVLDFVEMDCLEPKTKNNLTGK) lie on the Cytoplasmic side of the membrane. The chain crosses the membrane as a helical; Signal-anchor for type II membrane protein span at residues 61–81 (LLLVASLLILAIIVISQSSSF). Residues 82 to 436 (TSPSAFSQRE…KIHPHGYNSY (355 aa)) are Lumenal-facing. Position 96 to 127 (96 to 127 (HVLVTGGAGYIGSHAALRLLRDSYRVTIVDNL)) interacts with NAD(+). Tyr244 serves as the catalytic Proton acceptor.

It belongs to the NAD(P)-dependent epimerase/dehydratase family. The cofactor is NAD(+).

Its subcellular location is the golgi apparatus. It localises to the golgi stack membrane. It carries out the reaction UDP-beta-L-arabinopyranose = UDP-alpha-D-xylose. It functions in the pathway nucleotide-sugar biosynthesis; UDP-L-arabinose biosynthesis; UDP-L-arabinose from UDP-alpha-D-xylose: step 1/1. The protein operates within cell wall biogenesis; cell wall polysaccharide biosynthesis. The protein is Putative UDP-arabinose 4-epimerase 4 of Arabidopsis thaliana (Mouse-ear cress).